The following is a 295-amino-acid chain: Protein PAR32 (295 aa).

Alanine 2 carries the N-acetylalanine modification. Phosphoserine occurs at positions 36, 39, 47, 123, 138, 141, and 147. Positions 134–153 (SATRSHQSLHATTSSPNNNA) are enriched in polar residues. Disordered regions lie at residues 134–156 (SATR…APIV) and 217–295 (TSKK…TMFN). The segment covering 217–227 (TSKKPKNKLKG) has biased composition (basic residues). Phosphoserine is present on serine 246. Positions 246-256 (SPKSSRNTINH) are enriched in polar residues. Basic and acidic residues predominate over residues 265–274 (KFNLKDDNGK). The segment covering 275 to 284 (EKKKKKKKKS) has biased composition (basic residues). Residues 285–295 (GFFSSLKTMFN) are compositionally biased toward low complexity.

In terms of processing, hyperphosphorylated after treatment with rapamycin in a TAP42-dependent manner.

Its subcellular location is the cytoplasm. Its function is as follows. Involved in resistance to cisplatin. This is Protein PAR32 (PAR32) from Saccharomyces cerevisiae (strain ATCC 204508 / S288c) (Baker's yeast).